We begin with the raw amino-acid sequence, 187 residues long: tRNA (cytidine(56)-2'-O)-methyltransferase (187 aa).

S-adenosyl-L-methionine contacts are provided by residues Leu94 and 120-124; that span reads GAEKV.

Belongs to the aTrm56 family. In terms of assembly, homodimer.

The protein resides in the cytoplasm. The catalysed reaction is cytidine(56) in tRNA + S-adenosyl-L-methionine = 2'-O-methylcytidine(56) in tRNA + S-adenosyl-L-homocysteine + H(+). Functionally, specifically catalyzes the AdoMet-dependent 2'-O-ribose methylation of cytidine at position 56 in tRNAs. This Hyperthermus butylicus (strain DSM 5456 / JCM 9403 / PLM1-5) protein is tRNA (cytidine(56)-2'-O)-methyltransferase.